Reading from the N-terminus, the 172-residue chain is Neuropeptide-like protein nlp-8 (172 aa).

An N-terminal signal peptide occupies residues 1-26; the sequence is MSQKLLPISPLQLLFLQCLLIGFTAA.

In terms of processing, may be processed by convertase egl-3.

It is found in the secreted. Neuropeptide-like protein. Plays a role in behaviors associated with a sleep-like state induced by stress (SIS), acting in concert with the FARP (FMRFamide related) peptides, flp-13 and flp-24. The polypeptide is Neuropeptide-like protein nlp-8 (Caenorhabditis elegans).